A 108-amino-acid polypeptide reads, in one-letter code: UPF0060 membrane protein YnfA (108 aa).

Topologically, residues 1 to 5 (MIKTT) are periplasmic. The helical transmembrane segment at 6–26 (LLFFATALCEIIGCFLPWLWL) threads the bilayer. Topologically, residues 27–30 (KRNA) are cytoplasmic. The helical transmembrane segment at 31-51 (SIWLLLPAGISLALFVWLLTL) threads the bilayer. Residues 52-60 (HPAASGRVY) lie on the Periplasmic side of the membrane. Residues 61–81 (AAYGGVYVCTALIWLRVVDGV) form a helical membrane-spanning segment. The Cytoplasmic segment spans residues 82 to 84 (KLT). The chain crosses the membrane as a helical span at residues 85 to 105 (LYDWTGALIALCGMLIIVAGW). The Periplasmic portion of the chain corresponds to 106-108 (GRT).

Belongs to the UPF0060 family.

The protein resides in the cell inner membrane. The chain is UPF0060 membrane protein YnfA from Escherichia coli O127:H6 (strain E2348/69 / EPEC).